The chain runs to 196 residues: Small ribosomal subunit protein uS4c (196 aa).

One can recognise an S4 RNA-binding domain in the interval 89–149 (MRLDNILFRL…DKQRSKALIQ (61 aa)).

It belongs to the universal ribosomal protein uS4 family. As to quaternary structure, part of the 30S ribosomal subunit. Contacts protein S5. The interaction surface between S4 and S5 is involved in control of translational fidelity.

It localises to the plastid. The protein localises to the chloroplast. Functionally, one of the primary rRNA binding proteins, it binds directly to 16S rRNA where it nucleates assembly of the body of the 30S subunit. With S5 and S12 plays an important role in translational accuracy. This is Small ribosomal subunit protein uS4c (rps4) from Asparagus maritimus (Sea asparagus).